The chain runs to 432 residues: Glutamine synthetase, chloroplastic (432 aa).

Positions 79–159 (IIAEYIWIGG…VICDTYTPQG (81 aa)) constitute a GS beta-grasp domain. The GS catalytic domain maps to 166-432 (KRHKAAQIFS…LAAQKLSLNV (267 aa)).

It belongs to the glutamine synthetase family. In terms of assembly, homooctamer.

The protein localises to the plastid. It localises to the chloroplast. It carries out the reaction L-glutamate + NH4(+) + ATP = L-glutamine + ADP + phosphate + H(+). In terms of biological role, the light-modulated chloroplast enzyme, encoded by a nuclear gene and expressed primarily in leaves, is responsible for the reassimilation of the ammonia generated by photorespiration. This Daucus carota (Wild carrot) protein is Glutamine synthetase, chloroplastic (GLN2).